The primary structure comprises 717 residues: UvrABC system protein C (717 aa).

The GIY-YIG domain maps to 16–95; sequence DAPGVYRFHD…IKEYDPRFNV (80 aa). The 36-residue stretch at 208–243 folds into the UVR domain; it reads DTLIRKLDREMRQASEELEFERAARLRDDLEALRRA. Disordered stretches follow at residues 517-555 and 696-717; these read TAAG…GRPR and HAAL…GESQ. 2 stretches are compositionally biased toward basic and acidic residues: residues 541–553 and 707–717; these read EAER…ETGR and ESRDNAEGESQ.

This sequence belongs to the UvrC family. Interacts with UvrB in an incision complex.

The protein resides in the cytoplasm. In terms of biological role, the UvrABC repair system catalyzes the recognition and processing of DNA lesions. UvrC both incises the 5' and 3' sides of the lesion. The N-terminal half is responsible for the 3' incision and the C-terminal half is responsible for the 5' incision. The polypeptide is UvrABC system protein C (Saccharopolyspora erythraea (strain ATCC 11635 / DSM 40517 / JCM 4748 / NBRC 13426 / NCIMB 8594 / NRRL 2338)).